A 405-amino-acid chain; its full sequence is Dynactin subunit 2 (405 aa).

Residues 1–24 (MADPKYANLPGIASNEPDVYETSD) are disordered. 2 coiled-coil regions span residues 102 to 125 (QQKYQRLVNEIHELCQDVEKIQTS) and 379 to 405 (QQTMKENLLAVEENFSALDQRMKKLNK).

The protein belongs to the dynactin subunit 2 family. In terms of assembly, subunit of dynactin, a multiprotein complex part of a tripartite complex with dynein and a adapter, such as BICDL1, BICD2 or HOOK3. The dynactin complex is built around ACTR1A/ACTB filament and consists of an actin-related filament composed of a shoulder domain, a pointed end and a barbed end. Its length is defined by its flexible shoulder domain. The soulder is composed of 2 DCTN1 subunits, 4 DCTN2 and 2 DCTN3.

It localises to the cytoplasm. Its subcellular location is the cytoskeleton. The protein localises to the microtubule organizing center. The protein resides in the centrosome. It is found in the membrane. In terms of biological role, part of the dynactin complex that activates the molecular motor dynein for ultra-processive transport along microtubules. In the dynactin soulder domain, binds the ACTR1A filament and acts as a molecular ruler to determine the length. Modulates cytoplasmic dynein binding to an organelle, and plays a role in prometaphase chromosome alignment and spindle organization during mitosis. Involved in anchoring microtubules to centrosomes. This Danio rerio (Zebrafish) protein is Dynactin subunit 2 (dctn2).